A 2110-amino-acid polypeptide reads, in one-letter code: Tenascin (2110 aa).

Residues 1–22 (MGAVTWLLPGIFLALFALTPEG) form the signal peptide. N-linked (GlcNAc...) asparagine glycosylation occurs at Asn38. 3 positions are modified to phosphoserine: Ser65, Ser70, and Ser72. A disordered region spans residues 69 to 91 (ESASGEKDLTPTPESSGSFQEHT). Residue Ser72 is glycosylated (O-linked (Xyl...) (chondroitin sulfate) serine). Residues 80 to 89 (TPESSGSFQE) are compositionally biased toward polar residues. The stretch at 118–142 (DVKELLSRLEELELLVSSLREQCTM) forms a coiled coil. 2 N-linked (GlcNAc...) asparagine glycosylation sites follow: Asn166 and Asn184. In terms of domain architecture, EGF-like 1; incomplete spans 174 to 185 (CVCEPGWKGPNC). EGF-like domains lie at 186-216 (SEPD…GEDC), 217-247 (SQLA…GPDC), 248-279 (GLEV…GEDC), 280-310 (NEPL…GEDC), 311-341 (SELI…GEDC), 342-372 (GELT…GADC), 373-403 (SEKR…GADC), 404-434 (GDLQ…GEDC), 435-465 (SQRR…GFDC), 466-496 (SEMS…GEDC), 497-527 (RDRR…GPDC), 528-558 (AELS…GKDC), 559-589 (KEQR…GLDC), and 590-621 (GQRS…IDCS). 42 cysteine pairs are disulfide-bonded: Cys190-Cys200, Cys194-Cys205, Cys207-Cys216, Cys221-Cys231, Cys225-Cys236, Cys238-Cys247, Cys252-Cys263, Cys256-Cys268, Cys270-Cys279, Cys284-Cys294, Cys288-Cys299, Cys301-Cys310, Cys315-Cys325, Cys319-Cys330, Cys332-Cys341, Cys346-Cys356, Cys350-Cys361, Cys363-Cys372, Cys377-Cys387, Cys381-Cys392, Cys394-Cys403, Cys408-Cys418, Cys412-Cys423, Cys425-Cys434, Cys439-Cys449, Cys443-Cys454, Cys456-Cys465, Cys470-Cys480, Cys474-Cys485, Cys487-Cys496, Cys501-Cys511, Cys505-Cys516, Cys518-Cys527, Cys532-Cys542, Cys536-Cys547, Cys549-Cys558, Cys563-Cys573, Cys567-Cys578, Cys580-Cys589, Cys594-Cys604, Cys598-Cys609, and Cys611-Cys620. N-linked (GlcNAc...) asparagine glycosylation is present at Asn327. 14 consecutive Fibronectin type-III domains span residues 625-715 (PPKD…LPAP), 716-804 (EGLK…TRLD), 805-894 (APSH…TGLD), 895-988 (APRN…IDAP), 989-1077 (KDLR…VPSL), 1078-1165 (ENLT…TGTT), 1167-1259 (NLGE…LPQL), 1260-1348 (GGLS…AREP), 1349-1440 (EIGN…ALPL), 1442-1530 (ENLT…EAEP), 1531-1620 (EVDN…TAMG), 1621-1710 (SPKE…ALDG), 1711-1797 (PSGL…TDLD), and 1798-1886 (SPRE…IGLL). N-linked (GlcNAc...) asparagine glycosylation occurs at Asn788. Phosphothreonine is present on Thr905. N-linked (GlcNAc...) asparagine glycans are attached at residues Asn1018, Asn1079, Asn1093, Asn1119, Asn1184, Asn1210, Asn1275, Asn1301, Asn1354, Asn1364, Asn1394, and Asn1443. Residue Asn1718 is glycosylated (N-linked (GlcNAc...) asparagine). The region spanning 1884–2099 (GLLYPFPRDC…FAEMKLRPSN (216 aa)) is the Fibrinogen C-terminal domain. N-linked (GlcNAc...) asparagine glycosylation is found at Asn1969 and Asn2071.

It belongs to the tenascin family. As to quaternary structure, homohexamer; disulfide-linked. A homotrimer may be formed in the triple coiled-coil region and may be stabilized by disulfide rings at both ends. Two of such half-hexabrachions may be disulfide linked within the central globule. Interacts with CSPG4. Interacts (via the 3rd fibronectin type-III domain) with integrin ITGA9:ITGB1. N-glycosylated. As to expression, expressed in the corneal limbus, the periosteum and the rib molecular layer of the cerebellum, the matrix of kidney tubules, blood vessels, stomach and intestine (at protein level). In terms of tissue distribution, weakly expressed in the brain. Highly expressed in the thymus and moderately expressed in the brain.

It is found in the secreted. The protein resides in the extracellular space. The protein localises to the extracellular matrix. In terms of biological role, extracellular matrix protein implicated in guidance of migrating neurons as well as axons during development, synaptic plasticity as well as neuronal regeneration. Promotes neurite outgrowth when provided to neurons in culture. May play a role in supporting the growth of epithelial tumors. Ligand for integrins ITGA8:ITGB1, ITGA9:ITGB1, ITGAV:ITGB3 and ITGAV:ITGB6. In tumors, stimulates angiogenesis by elongation, migration and sprouting of endothelial cells. In Mus musculus (Mouse), this protein is Tenascin.